Reading from the N-terminus, the 118-residue chain is 5-hydroxyisourate hydrolase (118 aa).

The substrate site is built by H7, R46, and Y115.

The protein belongs to the transthyretin family. 5-hydroxyisourate hydrolase subfamily. Homotetramer.

The catalysed reaction is 5-hydroxyisourate + H2O = 5-hydroxy-2-oxo-4-ureido-2,5-dihydro-1H-imidazole-5-carboxylate + H(+). In terms of biological role, catalyzes the hydrolysis of 5-hydroxyisourate (HIU) to 2-oxo-4-hydroxy-4-carboxy-5-ureidoimidazoline (OHCU). In Brucella melitensis biotype 1 (strain ATCC 23456 / CCUG 17765 / NCTC 10094 / 16M), this protein is 5-hydroxyisourate hydrolase.